The following is a 289-amino-acid chain: SNF1-related protein kinase regulatory subunit beta-2 (289 aa).

A compositionally biased stretch (basic and acidic residues) spans 1-10; the sequence is MGNVNAREEA. A disordered region spans residues 1-59; it reads MGNVNAREEANSNNASAVEDEDAEICSREAMSAASDGNHVAPPELMGQSPPHSPRATQS. Gly2 carries the N-myristoyl glycine lipid modification. Positions 103–180 are kinase-interacting sequence (KIS); sequence PTMITWCHGG…AGNTFNILDL (78 aa). The segment at 217 to 289 is association with SNF1 complex (ASC); it reads EPPVVPPHLQ…TVVLYKSLQR (73 aa).

The protein belongs to the 5'-AMP-activated protein kinase beta subunit family. In terms of assembly, subunit of a probable heterotrimeric complex consisting of an alpha catalytic (KIN10 or KIN11) subunit, and a beta (KINB) and a gamma (KING or SNF4) non-catalytic regulatory subunits. Interacts with SNF4. Interacts with FLZ1, FLZ2, FLZ8, FLZ9, FLZ10, FLZ12, FLZ13 and FLZ14. Post-translationally, sumoylated. In terms of tissue distribution, expressed in leaves, stems, roots, flower buds and flowers. Not detectable in siliques.

It localises to the cell membrane. In terms of biological role, regulatory subunit of the probable trimeric SNF1-related protein kinase (SnRK) complex, which may play a role in a signal transduction cascade regulating gene expression and carbohydrate metabolism in higher plants. The SnRK complex may also be involved in the regulation of fatty acid synthesis by phosphorylation of acetyl-CoA carboxylase and in assimilation of nitrogen by phosphorylating nitrate reductase. The sequence is that of SNF1-related protein kinase regulatory subunit beta-2 (KINB2) from Arabidopsis thaliana (Mouse-ear cress).